Consider the following 519-residue polypeptide: Cytochrome P450 88A1 (519 aa).

A helical membrane pass occupies residues 1 to 21; sequence MLGVGMAAAVLLGAVALLLAD. Cysteine 466 serves as a coordination point for heme.

The protein belongs to the cytochrome P450 family. It depends on heme as a cofactor. Expressed in roots, developing leaves, the vegetative meristem, and suspension culture cells.

It localises to the membrane. It functions in the pathway plant hormone biosynthesis; gibberellin biosynthesis. In Zea mays (Maize), this protein is Cytochrome P450 88A1 (CYP88A1).